The sequence spans 272 residues: Endogenous Bornavirus-like nucleoprotein 2 (272 aa).

A disordered region spans residues 48 to 70; sequence MSHLRKDSQPSSPGDDAMDRSGL.

Its function is as follows. May act as an RNA-binding protein. The C-terminal region is highly homologous to the bornavirus nucleocapsid N protein that binds viral RNA and oligomerizes. The viral protein also possesses a nuclear import and a nuclear export signal. These 2 signals seem absent in EBLN-2 supporting an unrelated function in Human. The sequence is that of Endogenous Bornavirus-like nucleoprotein 2 (EBLN2) from Homo sapiens (Human).